Consider the following 284-residue polypeptide: UPF0354 protein SERP1303 (284 aa).

This sequence belongs to the UPF0354 family.

This chain is UPF0354 protein SERP1303, found in Staphylococcus epidermidis (strain ATCC 35984 / DSM 28319 / BCRC 17069 / CCUG 31568 / BM 3577 / RP62A).